The primary structure comprises 541 residues: Chaperonin GroEL 2 (541 aa).

Residues 29-32, 86-90, Gly-413, 476-478, and Asp-492 contribute to the ATP site; these read TLGP, DGTTT, and NAA.

Belongs to the chaperonin (HSP60) family. Forms a cylinder of 14 subunits composed of two heptameric rings stacked back-to-back. Interacts with the co-chaperonin GroES.

It is found in the secreted. The protein localises to the capsule. Its subcellular location is the cell surface. It localises to the cell wall. It catalyses the reaction ATP + H2O + a folded polypeptide = ADP + phosphate + an unfolded polypeptide.. Its function is as follows. Together with its co-chaperonin GroES, plays an essential role in assisting protein folding. The GroEL-GroES system forms a nano-cage that allows encapsulation of the non-native substrate proteins and provides a physical environment optimized to promote and accelerate protein folding. The chain is Chaperonin GroEL 2 from Mycolicibacterium paratuberculosis (strain ATCC BAA-968 / K-10) (Mycobacterium paratuberculosis).